We begin with the raw amino-acid sequence, 784 residues long: Lon protease (784 aa).

The 202-residue stretch at 6–207 folds into the Lon N-terminal domain; that stretch reads LPLMALRDMV…TVITTLTSNI (202 aa). 356–363 serves as a coordination point for ATP; sequence GPPGVGKT. In terms of domain architecture, Lon proteolytic spans 592–773; the sequence is EDQIGSTTGL…DQVLKHALVE (182 aa). Residues S679 and K722 contribute to the active site.

This sequence belongs to the peptidase S16 family. In terms of assembly, homohexamer. Organized in a ring with a central cavity.

It localises to the cytoplasm. The catalysed reaction is Hydrolysis of proteins in presence of ATP.. In terms of biological role, ATP-dependent serine protease that mediates the selective degradation of mutant and abnormal proteins as well as certain short-lived regulatory proteins. Required for cellular homeostasis and for survival from DNA damage and developmental changes induced by stress. Degrades polypeptides processively to yield small peptide fragments that are 5 to 10 amino acids long. Binds to DNA in a double-stranded, site-specific manner. This chain is Lon protease, found in Rickettsia prowazekii (strain Madrid E).